Consider the following 135-residue polypeptide: ATP synthase epsilon chain, chloroplastic (135 aa).

It belongs to the ATPase epsilon chain family. F-type ATPases have 2 components, CF(1) - the catalytic core - and CF(0) - the membrane proton channel. CF(1) has five subunits: alpha(3), beta(3), gamma(1), delta(1), epsilon(1). CF(0) has three main subunits: a, b and c.

It localises to the plastid. The protein resides in the chloroplast thylakoid membrane. Produces ATP from ADP in the presence of a proton gradient across the membrane. In Marchantia polymorpha (Common liverwort), this protein is ATP synthase epsilon chain, chloroplastic.